Reading from the N-terminus, the 164-residue chain is S-ribosylhomocysteine lyase (164 aa).

Residues His-54, His-58, and Cys-128 each contribute to the Fe cation site.

Belongs to the LuxS family. In terms of assembly, homodimer. Requires Fe cation as cofactor.

It carries out the reaction S-(5-deoxy-D-ribos-5-yl)-L-homocysteine = (S)-4,5-dihydroxypentane-2,3-dione + L-homocysteine. In terms of biological role, involved in the synthesis of autoinducer 2 (AI-2) which is secreted by bacteria and is used to communicate both the cell density and the metabolic potential of the environment. The regulation of gene expression in response to changes in cell density is called quorum sensing. Catalyzes the transformation of S-ribosylhomocysteine (RHC) to homocysteine (HC) and 4,5-dihydroxy-2,3-pentadione (DPD). The chain is S-ribosylhomocysteine lyase from Campylobacter hominis (strain ATCC BAA-381 / DSM 21671 / CCUG 45161 / LMG 19568 / NCTC 13146 / CH001A).